We begin with the raw amino-acid sequence, 314 residues long: Zinc transporter ZIP3 (314 aa).

The Extracellular portion of the chain corresponds to 1-3; the sequence is MVK. A helical membrane pass occupies residues 4–24; it reads LLVAKILCMVGVFFFMLLGSL. Topologically, residues 25-42 are cytoplasmic; it reads LPVKIIETDFEKAHRSKK. Residues 43–63 traverse the membrane as a helical segment; that stretch reads ILSLCNTFGGGVFLATCFNAL. Over 64–85 the chain is Extracellular; it reads LPAVREKLQKVLSLGHISTDYP. Residues 86 to 106 form a helical membrane-spanning segment; sequence LAETILLLGFFMTVFLEQLIL. Over 107-169 the chain is Cytoplasmic; that stretch reads TFRKEKPSFI…QGLSRASPVR (63 aa). Phosphoserine is present on residues S125 and S129. Residues 170–190 traverse the membrane as a helical segment; sequence LLSLAFALSAHSVFEGLALGL. At 191–196 the chain is on the extracellular side; sequence QEEGEK. A helical transmembrane segment spans residues 197–217; the sequence is VVSLFVGVAVHETLVAVALGI. Topologically, residues 218–229 are cytoplasmic; that stretch reads SMARSAMPLRDA. A helical transmembrane segment spans residues 230-250; the sequence is AKLAVTVSAMIPLGIGLGLGI. Residues 251-262 are Extracellular-facing; it reads ESAQGVPGSVAS. Residues 263–283 traverse the membrane as a helical segment; the sequence is VLLQGLAGGTFLFITFLEILA. Over 284-292 the chain is Cytoplasmic; it reads KELEEKSDR. Residues 293-313 form a helical membrane-spanning segment; the sequence is LLKVLFLVLGYTVLAGMVFLK. W314 is a topological domain (extracellular).

The protein belongs to the ZIP transporter (TC 2.A.5) family.

The protein localises to the cell membrane. Its subcellular location is the apical cell membrane. It catalyses the reaction Zn(2+)(in) = Zn(2+)(out). Functionally, transporter for the divalent cation Zn(2+). Mediates the influx of Zn(2+) into cells from extracellular space. Controls Zn(2+) accumulation into dentate gyrus granule cells in the hippocampus. Mediates Zn(2+) reuptake from the secreted milk within the alveolar lumen. This is Zinc transporter ZIP3 from Homo sapiens (Human).